The chain runs to 506 residues: Proline--tRNA ligase (506 aa).

It belongs to the class-II aminoacyl-tRNA synthetase family. ProS type 3 subfamily. As to quaternary structure, homodimer.

The protein resides in the cytoplasm. The catalysed reaction is tRNA(Pro) + L-proline + ATP = L-prolyl-tRNA(Pro) + AMP + diphosphate. Catalyzes the attachment of proline to tRNA(Pro) in a two-step reaction: proline is first activated by ATP to form Pro-AMP and then transferred to the acceptor end of tRNA(Pro). The polypeptide is Proline--tRNA ligase (Rhodopirellula baltica (strain DSM 10527 / NCIMB 13988 / SH1)).